We begin with the raw amino-acid sequence, 318 residues long: NADH-ubiquinone oxidoreductase chain 1 (318 aa).

Transmembrane regions (helical) follow at residues 2-22 (FTINILLLVIPILLAVAFLTL), 70-90 (MFIIAPILALTLALTMWIPLP), 100-120 (LGVLFMLAMSSLAVYSILWSG), 146-166 (LAIILLSVLLMNGSFTLSTLI), 171-191 (HLWLIFPSWPLAMMWFISTLA), 222-242 (LFFMAEYANIIMMNAFTTILF), 254-276 (LYTINFTTKTLLLTTSFLWIRAS), and 294-314 (LPLTLALCMWHVSLPITTSSI).

The protein belongs to the complex I subunit 1 family. Core subunit of respiratory chain NADH dehydrogenase (Complex I) which is composed of 45 different subunits.

It localises to the mitochondrion inner membrane. It carries out the reaction a ubiquinone + NADH + 5 H(+)(in) = a ubiquinol + NAD(+) + 4 H(+)(out). Its function is as follows. Core subunit of the mitochondrial membrane respiratory chain NADH dehydrogenase (Complex I) which catalyzes electron transfer from NADH through the respiratory chain, using ubiquinone as an electron acceptor. Essential for the catalytic activity and assembly of complex I. This is NADH-ubiquinone oxidoreductase chain 1 (MT-ND1) from Ceratotherium simum (White rhinoceros).